Consider the following 144-residue polypeptide: 3-dehydroquinate dehydratase (144 aa).

The active-site Proton acceptor is Tyr24. Positions 76, 82, and 89 each coordinate substrate. His102 acts as the Proton donor in catalysis. Substrate is bound by residues 103–104 (LS) and Arg113.

This sequence belongs to the type-II 3-dehydroquinase family. Homododecamer.

It carries out the reaction 3-dehydroquinate = 3-dehydroshikimate + H2O. Its pathway is metabolic intermediate biosynthesis; chorismate biosynthesis; chorismate from D-erythrose 4-phosphate and phosphoenolpyruvate: step 3/7. Its function is as follows. Catalyzes a trans-dehydration via an enolate intermediate. The polypeptide is 3-dehydroquinate dehydratase (Bordetella avium (strain 197N)).